A 189-amino-acid chain; its full sequence is Urease accessory protein UreF (189 aa).

This sequence belongs to the UreF family. UreD, UreF and UreG form a complex that acts as a GTP-hydrolysis-dependent molecular chaperone, activating the urease apoprotein by helping to assemble the nickel containing metallocenter of UreC. The UreE protein probably delivers the nickel.

The protein localises to the cytoplasm. In terms of biological role, required for maturation of urease via the functional incorporation of the urease nickel metallocenter. The protein is Urease accessory protein UreF of Staphylococcus xylosus.